The following is a 137-amino-acid chain: Nucleoside diphosphate kinase (137 aa).

ATP contacts are provided by K9, F57, R85, T91, R102, and N112. Catalysis depends on H115, which acts as the Pros-phosphohistidine intermediate.

The protein belongs to the NDK family. Homotetramer. Mg(2+) is required as a cofactor.

Its subcellular location is the cytoplasm. It catalyses the reaction a 2'-deoxyribonucleoside 5'-diphosphate + ATP = a 2'-deoxyribonucleoside 5'-triphosphate + ADP. It carries out the reaction a ribonucleoside 5'-diphosphate + ATP = a ribonucleoside 5'-triphosphate + ADP. Major role in the synthesis of nucleoside triphosphates other than ATP. The ATP gamma phosphate is transferred to the NDP beta phosphate via a ping-pong mechanism, using a phosphorylated active-site intermediate. The chain is Nucleoside diphosphate kinase from Geotalea daltonii (strain DSM 22248 / JCM 15807 / FRC-32) (Geobacter daltonii).